Here is a 59-residue protein sequence, read N- to C-terminus: uncharacterized protein (59 aa).

Residue 33–40 participates in ATP binding; that stretch reads GRRRVGKT.

This is an uncharacterized protein from Methanocaldococcus jannaschii (strain ATCC 43067 / DSM 2661 / JAL-1 / JCM 10045 / NBRC 100440) (Methanococcus jannaschii).